The following is a 272-amino-acid chain: Sordarin/hypoxysordarin biosynthesis cluster protein P (272 aa).

N-linked (GlcNAc...) asparagine glycans are attached at residues Asn-6 and Asn-23. Helical transmembrane passes span 31–51 (FLASIWPYRHMMWIGPMLLFL) and 67–87 (AYHMPYSILALHVFISFVDLA). The N-linked (GlcNAc...) asparagine glycan is linked to Asn-208.

It is found in the membrane. It functions in the pathway antibiotic biosynthesis. Functionally, part of the gene cluster that mediates the biosynthesis of sordarin and hypoxysordarin, glycoside antibiotics with a unique tetracyclic diterpene aglycone structure. First, the geranylgeranyl diphosphate synthase sdnC constructs GGDP from farnesyl diphosphate and isopentenyl diphosphate. The diterpene cyclase sdnA then catalyzes the cyclization of GGDP to afford cycloaraneosene. Cycloaraneosene is then hydroxylated four times by the putative cytochrome P450 monooxygenases sdnB, sdnE, sdnF and sdnH to give a hydroxylated cycloaraneosene derivative such as cycloaraneosene-8,9,13,19-tetraol. Although the order of the hydroxylations is unclear, at least C8, C9 and C13 of the cycloaraneosene skeleton are hydroxylated before the sordaricin formation. Dehydration of the 13-hydroxy group of the hydroxylated cycloaraneosene derivative might be catalyzed by an unassigned hypothetical protein such as sdnG and sdnP to construct the cyclopentadiene moiety. The FAD-dependent oxidoreductase sdnN is proposed to catalyze the oxidation at C9 of the hydroxylated cycloaraneosene derivative and also catalyze the Baeyer-Villiger oxidation to give the lactone intermediate. The presumed lactone intermediate would be hydrolyzed to give an acrolein moiety and a carboxylate moiety. Then, [4+2]cycloaddition would occur between the acrolein moiety and the cyclopentadiene moiety to give sordaricin. SdnN might also be involved in the [4+2]cycloaddition after the hypothesized oxidation to accommodate the oxidized product and prompt the [4+2]cycloaddition. GDP-6-deoxy-D-altrose may be biosynthesized from GDP-D-mannose by the putative GDP-mannose-4,6-dehydratase sdnI and the short-chain dehydrogenase sdnK. The glycosyltransferase sdnJ catalyzes the attachment of 6-deoxy-D-altrose onto the 19-hydroxy group of sordaricin to give 4'-O-demethylsordarin. The methyltransferase sdnD would complete the biosynthesis of sordarin. Sordarin can be further modified into hypoxysordarin. The unique acyl chain at the 3'-hydroxy group of hypoxysordarin would be constructed by an iterative type I PKS sdnO and the trans-acting polyketide methyltransferase sdnL. SdnL would be responsible for the introduction of an alpha-methyl group of the polyketide chain. Alternatively, the beta-lactamase-like protein sdnR might be responsible for the cleavage and transfer of the polyketide chain from the PKS sdnO to sordarin. Two putative cytochrome P450 monooxygenases, sdnQ and sdnT, might catalyze the epoxidations of the polyketide chain to complete the biosynthesis of hypoxysordarin. Transcriptional regulators sdnM and sdnS are presumably encoded for the transcriptional regulation of the expression of the sdn gene cluster. The polypeptide is Sordarin/hypoxysordarin biosynthesis cluster protein P (Sordaria araneosa (Pleurage araneosa)).